Reading from the N-terminus, the 415-residue chain is Methylaspartate ammonia-lyase 2 (415 aa).

Q173 serves as a coordination point for (2S,3S)-3-methyl-L-aspartate. Mg(2+) contacts are provided by D238, E273, and D307. Residue Q329 coordinates (2S,3S)-3-methyl-L-aspartate. K331 functions as the Proton acceptor in the catalytic mechanism. 360 to 361 provides a ligand contact to (2S,3S)-3-methyl-L-aspartate; sequence TC.

The protein belongs to the methylaspartate ammonia-lyase family. In terms of assembly, homodimer. Requires Mg(2+) as cofactor.

It carries out the reaction (2S,3S)-3-methyl-L-aspartate = mesaconate + NH4(+). The protein operates within amino-acid degradation; L-glutamate degradation via mesaconate pathway; acetate and pyruvate from L-glutamate: step 2/4. Functionally, involved in the methylaspartate cycle. Catalyzes the formation of the alpha,beta-unsaturated bond by the reversible anti elimination of ammonia from L-threo-beta-methylaspartate (L-threo-(2S,3S)-3-methylaspartate) to give mesaconate. The protein is Methylaspartate ammonia-lyase 2 of Carboxydothermus hydrogenoformans (strain ATCC BAA-161 / DSM 6008 / Z-2901).